A 185-amino-acid chain; its full sequence is Elongation factor P (185 aa).

It belongs to the elongation factor P family.

It is found in the cytoplasm. It participates in protein biosynthesis; polypeptide chain elongation. In terms of biological role, involved in peptide bond synthesis. Stimulates efficient translation and peptide-bond synthesis on native or reconstituted 70S ribosomes in vitro. Probably functions indirectly by altering the affinity of the ribosome for aminoacyl-tRNA, thus increasing their reactivity as acceptors for peptidyl transferase. This Salinispora arenicola (strain CNS-205) protein is Elongation factor P.